Reading from the N-terminus, the 675-residue chain is NADH-ubiquinone oxidoreductase chain 5 (675 aa).

19 consecutive transmembrane segments (helical) span residues 3–23 (LLPL…GKFL), 27–47 (VLFV…WIFY), 75–95 (FLFD…SLLV), 108–127 (HIIR…LMLV), 132–154 (FVQL…NFWY), 177–197 (IYFS…GVVF), 211–231 (FLGF…LGAI), 251–271 (TPVS…FVLI), 284–304 (LFLV…VGLV), 311–329 (VIAY…ACGM), 334–354 (VGLF…LGAG), 380–400 (YVAI…TGFY), 413–433 (FSIN…ITSF), 462–482 (SFIF…GFIF), 519–539 (LIPL…YFVI), 564–584 (YFDL…FYLL), 593–613 (LIEL…SIIF), 624–644 (YIFV…SLFF), and 649–669 (SFFN…LSFG).

It belongs to the complex I subunit 5 family.

It localises to the mitochondrion inner membrane. It carries out the reaction a ubiquinone + NADH + 5 H(+)(in) = a ubiquinol + NAD(+) + 4 H(+)(out). Core subunit of the mitochondrial membrane respiratory chain NADH dehydrogenase (Complex I) that is believed to belong to the minimal assembly required for catalysis. Complex I functions in the transfer of electrons from NADH to the respiratory chain. The immediate electron acceptor for the enzyme is believed to be ubiquinone. The polypeptide is NADH-ubiquinone oxidoreductase chain 5 (ND5) (Acanthamoeba castellanii (Amoeba)).